The primary structure comprises 362 residues: Ciliary neurotrophic factor receptor subunit alpha (362 aa).

The N-terminal stretch at 1 to 19 (MANPVPSACCVVLAAVVVV) is a signal peptide. Residues 23 to 103 (RHSQQDSHIQ…HLKYQTYLRV (81 aa)) form the Ig-like C2-type domain. C44 and C87 form a disulfide bridge. N-linked (GlcNAc...) asparagine glycans are attached at residues N58, N68, N140, and N188. 2 Fibronectin type-III domains span residues 106–203 (PPKE…VKPD) and 204–304 (PPES…TEEP). Positions 288-292 (WSDWS) match the WSXWS motif motif. D334 carries GPI-anchor amidated aspartate lipidation. A propeptide spans 335–362 (KGAGVGSGAVAVCWTAGLVLAAYGVLFI) (removed in mature form).

It belongs to the type I cytokine receptor family. Type 3 subfamily. In terms of assembly, heterotrimer of the alpha subunit, LIFR and IL6ST. As to expression, highly expressed in nervous system. Also found in skeletal muscle.

The protein localises to the cell membrane. Binds to CNTF (GPA). The alpha subunit provides the receptor specificity. This is Ciliary neurotrophic factor receptor subunit alpha (CNTFR) from Gallus gallus (Chicken).